A 214-amino-acid chain; its full sequence is Large ribosomal subunit protein uL4 (214 aa).

The tract at residues 56–86 (THKVKNRAEVSGTGKKPWKQKSTGKARAGSK) is disordered. Residues 71 to 85 (KPWKQKSTGKARAGS) are compositionally biased toward basic residues.

Belongs to the universal ribosomal protein uL4 family. In terms of assembly, part of the 50S ribosomal subunit.

One of the primary rRNA binding proteins, this protein initially binds near the 5'-end of the 23S rRNA. It is important during the early stages of 50S assembly. It makes multiple contacts with different domains of the 23S rRNA in the assembled 50S subunit and ribosome. Functionally, forms part of the polypeptide exit tunnel. The sequence is that of Large ribosomal subunit protein uL4 from Mesomycoplasma hyopneumoniae (strain 232) (Mycoplasma hyopneumoniae).